Reading from the N-terminus, the 166-residue chain is Protein-export protein SecB (166 aa).

Belongs to the SecB family. Homotetramer, a dimer of dimers. One homotetramer interacts with 1 SecA dimer.

Its subcellular location is the cytoplasm. Functionally, one of the proteins required for the normal export of preproteins out of the cell cytoplasm. It is a molecular chaperone that binds to a subset of precursor proteins, maintaining them in a translocation-competent state. It also specifically binds to its receptor SecA. This chain is Protein-export protein SecB, found in Roseobacter denitrificans (strain ATCC 33942 / OCh 114) (Erythrobacter sp. (strain OCh 114)).